We begin with the raw amino-acid sequence, 534 residues long: Monolignol oxidoreductase AtBBE-like 13 (534 aa).

An N-terminal signal peptide occupies residues 1-29; sequence MAFVLMNNTNAFLVTLLLLSLSYIPLSFS. Residues Asn7 and Asn59 are each glycosylated (N-linked (GlcNAc...) asparagine). A disulfide bridge connects residues Cys38 and Cys102. A cross-link (6-(S-cysteinyl)-8alpha-(pros-histidyl)-FAD (His-Cys)) is located at residues 117-181; it reads HDYEGLSYVS…KIHGFPAGLC (65 aa).

It belongs to the oxygen-dependent FAD-linked oxidoreductase family. The cofactor is FAD. Post-translationally, the FAD cofactor is bound via a bicovalent 6-S-cysteinyl, 8alpha-N1-histidyl FAD linkage.

The protein localises to the secreted. Its subcellular location is the cell wall. The catalysed reaction is (E)-4-coumaroyl alcohol + A = (E)-4-coumaraldehyde + AH2. It catalyses the reaction (E)-coniferol + A = (E)-coniferaldehyde + AH2. The enzyme catalyses (E)-sinapyl alcohol + A = (E)-sinapaldehyde + AH2. It participates in phenylpropanoid metabolism. Mediates oxidation of p-hydroxylated derivatives of cinnamyl alcohol (i.e. the monolignols p-coumaryl-, coniferyl-, and sinapyl alcohol) to their corresponding aldehydes. The electron acceptor required for these reactions is not known, but does not seem to be dioxygen. Is much less efficient towards cinnamyl alcohol. This Arabidopsis thaliana (Mouse-ear cress) protein is Monolignol oxidoreductase AtBBE-like 13.